The chain runs to 346 residues: Methionine import ATP-binding protein MetN 1 (346 aa).

One can recognise an ABC transporter domain in the interval 2-241; the sequence is IELKNVSKVF…PQHVTTKKFV (240 aa). 38-45 provides a ligand contact to ATP; that stretch reads GYSGAGKS.

This sequence belongs to the ABC transporter superfamily. Methionine importer (TC 3.A.1.24) family. In terms of assembly, the complex is composed of two ATP-binding proteins (MetN), two transmembrane proteins (MetI) and a solute-binding protein (MetQ).

The protein resides in the cell membrane. The enzyme catalyses L-methionine(out) + ATP + H2O = L-methionine(in) + ADP + phosphate + H(+). The catalysed reaction is D-methionine(out) + ATP + H2O = D-methionine(in) + ADP + phosphate + H(+). In terms of biological role, part of the ABC transporter complex MetNIQ involved in methionine import. Responsible for energy coupling to the transport system. The chain is Methionine import ATP-binding protein MetN 1 from Bacillus cereus (strain ATCC 14579 / DSM 31 / CCUG 7414 / JCM 2152 / NBRC 15305 / NCIMB 9373 / NCTC 2599 / NRRL B-3711).